The primary structure comprises 349 residues: Aminomethyltransferase (349 aa).

This sequence belongs to the GcvT family. As to quaternary structure, the glycine cleavage system is composed of four proteins: P, T, L and H.

It catalyses the reaction N(6)-[(R)-S(8)-aminomethyldihydrolipoyl]-L-lysyl-[protein] + (6S)-5,6,7,8-tetrahydrofolate = N(6)-[(R)-dihydrolipoyl]-L-lysyl-[protein] + (6R)-5,10-methylene-5,6,7,8-tetrahydrofolate + NH4(+). Functionally, the glycine cleavage system catalyzes the degradation of glycine. This chain is Aminomethyltransferase, found in Thermus thermophilus (strain ATCC 27634 / DSM 579 / HB8).